The chain runs to 508 residues: 3-octaprenyl-4-hydroxybenzoate carboxy-lyase (508 aa).

N172 is a binding site for Mn(2+). Prenylated FMN-binding positions include 175 to 177 (IYR), 189 to 191 (RWL), and 194 to 195 (RG). Residue E238 coordinates Mn(2+). D287 functions as the Proton donor in the catalytic mechanism. Residues 483 to 508 (GEYGIATPPPPPRHSPPSDERGHDDV) form a disordered region. Residues 498–508 (PPSDERGHDDV) show a composition bias toward basic and acidic residues.

This sequence belongs to the UbiD family. As to quaternary structure, homohexamer. Prenylated FMN serves as cofactor. It depends on Mn(2+) as a cofactor.

The protein resides in the cell membrane. The enzyme catalyses a 4-hydroxy-3-(all-trans-polyprenyl)benzoate + H(+) = a 2-(all-trans-polyprenyl)phenol + CO2. The protein operates within cofactor biosynthesis; ubiquinone biosynthesis. Its function is as follows. Catalyzes the decarboxylation of 3-octaprenyl-4-hydroxy benzoate to 2-octaprenylphenol, an intermediate step in ubiquinone biosynthesis. The protein is 3-octaprenyl-4-hydroxybenzoate carboxy-lyase of Chromohalobacter salexigens (strain ATCC BAA-138 / DSM 3043 / CIP 106854 / NCIMB 13768 / 1H11).